The following is a 464-amino-acid chain: MTVKTRFAPSPTGYLHIGGVRTALFSWAFARHHKGEFLLRIEDTDLARSTAESVNIILDGMKWVGLNYDNADNVVYQTRRFDRYKEVIAELLEKGHAYYCYCSKEELEAMREKAEKEGSATYDRRWRPEVGKTLPEIPSDVQPVVRFKTPLDGVTKWTDLVKGEISIPNEALDDLIIARADGTPTYNFCVVVDDYDMGVTHVIRGDDHVNNTPKQINILKAIDANLPEYGHLPMILNEQGKKISKRSGDTVAITDFGAMGILPEAMLNYLARLGWAHGDDEFFTMEQFIEWFDLKDVSPSPSRMDLKKLYWINGEHIKITPNGKLAELVKPRLALRDIHETEKPALEDVLELVKDRPQDLNTLADECFYFYVKQTPAEADVQKHWDDEAAARMLRFAERLEGLEDWNAEAIHDLFKPFCDEEGIKMGKLGMPLRLAVCGTAKTPSVDAVLALIGKEEVLKRIRA.

The 'HIGH' region motif lies at 9–19; it reads PSPTGYLHIGG. Positions 242–246 match the 'KMSKS' region motif; sequence KISKR. Lys245 provides a ligand contact to ATP.

Belongs to the class-I aminoacyl-tRNA synthetase family. Glutamate--tRNA ligase type 1 subfamily. In terms of assembly, monomer.

The protein localises to the cytoplasm. It carries out the reaction tRNA(Glu) + L-glutamate + ATP = L-glutamyl-tRNA(Glu) + AMP + diphosphate. Catalyzes the attachment of glutamate to tRNA(Glu) in a two-step reaction: glutamate is first activated by ATP to form Glu-AMP and then transferred to the acceptor end of tRNA(Glu). The polypeptide is Glutamate--tRNA ligase (Neisseria meningitidis serogroup B (strain ATCC BAA-335 / MC58)).